The chain runs to 393 residues: Putative amino-acid ABC transporter permease protein YhdX (393 aa).

Transmembrane regions (helical) follow at residues 21-41 (AWLF…WLFH), 92-112 (LLVS…IGLA), 128-148 (IEIF…FAVL), 180-200 (DGFI…VGLF), 219-239 (IAAV…GAAL), 256-276 (VLIP…SAFI), 333-353 (SSLA…GTVL), and 363-383 (IAMT…LMNI). The ABC transmembrane type-1 domain occupies 88 to 381 (LLNTLLVSAL…IISLTISLLM (294 aa)).

Belongs to the binding-protein-dependent transport system permease family. HisMQ subfamily.

It is found in the cell inner membrane. Probably part of the binding-protein-dependent transport system YdhWXYZ for an amino acid; probably responsible for the translocation of the substrate across the membrane. The polypeptide is Putative amino-acid ABC transporter permease protein YhdX (yhdX) (Escherichia coli (strain K12)).